The following is a 473-amino-acid chain: MKNLYSLRRFYHVETLFNGTLIVGGRDQESTGFAWWAGNARLINLSGKLLGAHVAHAGLIVFWAGAMNLFEVAHFVPEKPMYEQGLILLPHLATLGYGVGPGGEVIDTFPYFVSGVLHLISSAVLGFGGVYHSLIGPETLEESFPFFGYVWKDKNKMTTILGIHLVLLGLGALLLVLKARYLGGVYDTWAPGGGDVRVITNPTTSPAVIFGYILKSPFGGEGWIVSVDNMEDVIGGHLWIGLLCVFGGIWHILTKPFGWARRAFVWSGEAYLSYSLGAISVMGFIACCFVWFNNTVYPSEFYGPTGPEASQAQAFTFLVRDQRLGANVGSAQGPTGLGKYLMRSPTGEIIFGGETMRFWDTRAPWIEPLRGPNGLDLSKLKNDIQPWQERRSAEYMTHAPLGSLNSVGGVATEINAVNFVSPRSWLSTSHFVLGFFFFVAHLWHAGRARAAAAGFEKGIDRDTEPTLFMRPLD.

Residues 1 to 14 (MKNLYSLRRFYHVE) constitute a propeptide that is removed on maturation. An N-acetylthreonine modification is found at Thr15. At Thr15 the chain carries Phosphothreonine. 5 helical membrane passes run 69–93 (LFEV…PHLA), 134–155 (LIGP…KDKN), 178–200 (KARY…RVIT), 255–275 (KPFG…LSYS), and 291–312 (WFNN…ASQA). Glu367 contacts [CaMn4O5] cluster. The chain crosses the membrane as a helical span at residues 447–471 (RARAAAAGFEKGIDRDTEPTLFMRP).

The protein belongs to the PsbB/PsbC family. PsbC subfamily. PSII is composed of 1 copy each of membrane proteins PsbA, PsbB, PsbC, PsbD, PsbE, PsbF, PsbH, PsbI, PsbJ, PsbK, PsbL, PsbM, PsbT, PsbX, PsbY, PsbZ, Psb30/Ycf12, at least 3 peripheral proteins of the oxygen-evolving complex and a large number of cofactors. It forms dimeric complexes. Binds multiple chlorophylls and provides some of the ligands for the Ca-4Mn-5O cluster of the oxygen-evolving complex. It may also provide a ligand for a Cl- that is required for oxygen evolution. PSII binds additional chlorophylls, carotenoids and specific lipids. serves as cofactor.

The protein localises to the plastid. The protein resides in the chloroplast thylakoid membrane. Functionally, one of the components of the core complex of photosystem II (PSII). It binds chlorophyll and helps catalyze the primary light-induced photochemical processes of PSII. PSII is a light-driven water:plastoquinone oxidoreductase, using light energy to abstract electrons from H(2)O, generating O(2) and a proton gradient subsequently used for ATP formation. This is Photosystem II CP43 reaction center protein from Nephroselmis olivacea (Green alga).